We begin with the raw amino-acid sequence, 337 residues long: F420-dependent glucose-6-phosphate dehydrogenase 2 (337 aa).

Asp40 provides a ligand contact to coenzyme F420-(gamma-Glu)n. The Proton donor role is filled by His41. Residues Thr77 and 108–109 (TG) each bind coenzyme F420-(gamma-Glu)n. Glu110 functions as the Proton acceptor in the catalytic mechanism. Coenzyme F420-(gamma-Glu)n contacts are provided by residues Asn113, 178–179 (GG), and 181–182 (VV). Residues Thr196, Lys199, Lys260, and Arg284 each coordinate substrate.

The protein belongs to the F420-dependent glucose-6-phosphate dehydrogenase family. Homodimer.

It carries out the reaction oxidized coenzyme F420-(gamma-L-Glu)(n) + D-glucose 6-phosphate + H(+) = 6-phospho-D-glucono-1,5-lactone + reduced coenzyme F420-(gamma-L-Glu)(n). Functionally, catalyzes the coenzyme F420-dependent oxidation of glucose 6-phosphate (G6P) to 6-phosphogluconolactone. This chain is F420-dependent glucose-6-phosphate dehydrogenase 2, found in Rhodococcus jostii (strain RHA1).